Reading from the N-terminus, the 390-residue chain is Succinate--CoA ligase [ADP-forming] subunit beta (390 aa).

In terms of domain architecture, ATP-grasp spans 9 to 248; that stretch reads KEILRRHKAN…ITEEDPLEVQ (240 aa). ATP contacts are provided by residues lysine 50, 57–59, glutamate 103, isoleucine 106, and glutamate 111; that span reads GRG. 2 residues coordinate Mg(2+): asparagine 203 and aspartate 217. Substrate is bound by residues asparagine 268 and 325–327; that span reads GIV.

The protein belongs to the succinate/malate CoA ligase beta subunit family. Heterotetramer of two alpha and two beta subunits. Mg(2+) is required as a cofactor.

The catalysed reaction is succinate + ATP + CoA = succinyl-CoA + ADP + phosphate. The enzyme catalyses GTP + succinate + CoA = succinyl-CoA + GDP + phosphate. It participates in carbohydrate metabolism; tricarboxylic acid cycle; succinate from succinyl-CoA (ligase route): step 1/1. Its function is as follows. Succinyl-CoA synthetase functions in the citric acid cycle (TCA), coupling the hydrolysis of succinyl-CoA to the synthesis of either ATP or GTP and thus represents the only step of substrate-level phosphorylation in the TCA. The beta subunit provides nucleotide specificity of the enzyme and binds the substrate succinate, while the binding sites for coenzyme A and phosphate are found in the alpha subunit. The sequence is that of Succinate--CoA ligase [ADP-forming] subunit beta from Leptospira interrogans serogroup Icterohaemorrhagiae serovar copenhageni (strain Fiocruz L1-130).